Consider the following 151-residue polypeptide: 6,7-dimethyl-8-ribityllumazine synthase (151 aa).

5-amino-6-(D-ribitylamino)uracil-binding positions include F15, 49-51, and 73-75; these read AVE and AVI. A (2S)-2-hydroxy-3-oxobutyl phosphate-binding site is contributed by 78–79; that stretch reads ET. H81 functions as the Proton donor in the catalytic mechanism. F106 lines the 5-amino-6-(D-ribitylamino)uracil pocket. R120 is a binding site for (2S)-2-hydroxy-3-oxobutyl phosphate.

Belongs to the DMRL synthase family. In terms of assembly, forms an icosahedral capsid composed of 60 subunits, arranged as a dodecamer of pentamers.

It catalyses the reaction (2S)-2-hydroxy-3-oxobutyl phosphate + 5-amino-6-(D-ribitylamino)uracil = 6,7-dimethyl-8-(1-D-ribityl)lumazine + phosphate + 2 H2O + H(+). It functions in the pathway cofactor biosynthesis; riboflavin biosynthesis; riboflavin from 2-hydroxy-3-oxobutyl phosphate and 5-amino-6-(D-ribitylamino)uracil: step 1/2. In terms of biological role, catalyzes the formation of 6,7-dimethyl-8-ribityllumazine by condensation of 5-amino-6-(D-ribitylamino)uracil with 3,4-dihydroxy-2-butanone 4-phosphate. This is the penultimate step in the biosynthesis of riboflavin. The polypeptide is 6,7-dimethyl-8-ribityllumazine synthase (Coxiella burnetii (strain CbuG_Q212) (Coxiella burnetii (strain Q212))).